Reading from the N-terminus, the 417-residue chain is MEDIIEGGISSDDDFDSSDSSSDEEESDTSPQIMKSDVTMASPPSTPEPSPDVSASTSNLKRERQRSPITWEHQSPLSRVYRSPSPMRFGKRPRISSNSTSRSCKTSWADRVREAAAQRRPSRPFRKPYSHPRNGPLRNGPPRAPPLLKLFDISILPKSGEPKLFLPVPSLPCQEAEKTNDKYVLAMAQRAMHDVPISSKQLTANLLPVKFKPLLSIVRYTPNYYYWVSMRKETIASANLCTVAAFLDESLCWGQQYLKNDFIFSENGKDIILDTSSALLSQLVHKIKMLPFCHCLMQTTPQDHIVKQVCYLIASNNRILDAVRYLQTSVIKSPIVLLLAYAVCLPAAIICTKNETQLYSHCMRILKEYRPGDVMNILHESLTQHLNKCPSSTCAYTTRAIVGTKANTTGLFFLPTQ.

Residues Met-1–Asp-28 show a composition bias toward acidic residues. The disordered stretch occupies residues Met-1 to Arg-143. Positions Arg-64 to Arg-120 are interaction with RNA. The short motif at Arg-88–Arg-94 is the Nuclear localization signal element. Low complexity predominate over residues Ser-96 to Ser-107. The interaction with host ALYREF or mouse ALYREF2 stretch occupies residues Thr-106–Arg-120. Positions Trp-108–Ala-117 are enriched in basic and acidic residues. The Nuclear localization signal signature appears at Gln-118 to Lys-127. Residues Arg-120–Ser-130 show a composition bias toward basic residues. Over residues Pro-132 to Pro-141 the composition is skewed to low complexity. Zn(2+) is bound by residues Cys-295, His-385, Cys-389, and Cys-394. The CHC2-type zinc finger occupies Cys-295–Cys-394.

This sequence belongs to the HHV-1 ICP27 protein family. In terms of assembly, homodimer. Homodimerization is required for transactivation. Interacts with host ALYREF and with mouse ALYREF2. Associates in a complex with RNA, and host export factors NXF1/TAP and ALYREF or ALYREF2; these interactions allow nuclear export of viral transcripts.

Its subcellular location is the host cytoplasm. The protein localises to the host nucleus. Probably acts as a viral splicing factor that regulates viral RNA splicing. Functions as a multifunctional regulator of the expression of viral lytic genes. Early protein that promotes the accumulation and nuclear export of viral intronless RNA transcripts by interacting with mRNAs and cellular export proteins. The sequence is that of mRNA export factor ICP27 homolog (EJRF1) from Saimiriine herpesvirus 2 (strain 11) (SaHV-2).